We begin with the raw amino-acid sequence, 744 residues long: Photosystem I P700 chlorophyll a apoprotein A2 (744 aa).

8 helical membrane-spanning segments follow: residues 48–71, 137–160, 177–201, 275–293, 337–360, 376–402, 424–446, and 527–545; these read LFAT…FHIA, LYAG…LHLQ, LNHH…HVAI, MAHH…GHMY, LHFQ…QHMY, AALY…IFLV, AIIS…LYVH, and FLVH…LILV. [4Fe-4S] cluster contacts are provided by Cys-569 and Cys-578. 2 helical membrane-spanning segments follow: residues 585–606 and 653–675; these read AFYL…YWHW and LAVW…MFLI. Chlorophyll a-binding residues include His-664, Met-672, and Tyr-680. Trp-681 is a binding site for phylloquinone. The helical transmembrane segment at 717 to 737 threads the bilayer; it reads LVGLAHFTVGYVLTYAAFVIA.

Belongs to the PsaA/PsaB family. As to quaternary structure, the PsaA/B heterodimer binds the P700 chlorophyll special pair and subsequent electron acceptors. PSI consists of a core antenna complex that captures photons, and an electron transfer chain that converts photonic excitation into a charge separation. The cyanobacterial PSI reaction center is composed of one copy each of PsaA,B,C,D,E,F,I,J,K,L,M and X, and forms trimeric complexes. Requires PSI electron transfer chain: 5 chlorophyll a, 1 chlorophyll a', 2 phylloquinones and 3 4Fe-4S clusters. PSI core antenna: 90 chlorophyll a, 22 carotenoids, 3 phospholipids and 1 galactolipid. P700 is a chlorophyll a/chlorophyll a' dimer, A0 is one or more chlorophyll a, A1 is one or both phylloquinones and FX is a shared 4Fe-4S iron-sulfur center. as cofactor.

It is found in the cellular thylakoid membrane. The catalysed reaction is reduced [plastocyanin] + hnu + oxidized [2Fe-2S]-[ferredoxin] = oxidized [plastocyanin] + reduced [2Fe-2S]-[ferredoxin]. PsaA and PsaB bind P700, the primary electron donor of photosystem I (PSI), as well as the electron acceptors A0, A1 and FX. PSI is a plastocyanin/cytochrome c6-ferredoxin oxidoreductase, converting photonic excitation into a charge separation, which transfers an electron from the donor P700 chlorophyll pair to the spectroscopically characterized acceptors A0, A1, FX, FA and FB in turn. Oxidized P700 is reduced on the lumenal side of the thylakoid membrane by plastocyanin or cytochrome c6. The sequence is that of Photosystem I P700 chlorophyll a apoprotein A2 from Synechococcus sp. (strain JA-2-3B'a(2-13)) (Cyanobacteria bacterium Yellowstone B-Prime).